The sequence spans 301 residues: Ribonuclease Z (301 aa).

Histidine 63, histidine 65, aspartate 67, histidine 68, histidine 141, aspartate 204, and histidine 262 together coordinate Zn(2+). The Proton acceptor role is filled by aspartate 67.

This sequence belongs to the RNase Z family. Homodimer. The cofactor is Zn(2+).

It catalyses the reaction Endonucleolytic cleavage of RNA, removing extra 3' nucleotides from tRNA precursor, generating 3' termini of tRNAs. A 3'-hydroxy group is left at the tRNA terminus and a 5'-phosphoryl group is left at the trailer molecule.. Functionally, zinc phosphodiesterase, which displays some tRNA 3'-processing endonuclease activity. Probably involved in tRNA maturation, by removing a 3'-trailer from precursor tRNA. The sequence is that of Ribonuclease Z from Streptomyces avermitilis (strain ATCC 31267 / DSM 46492 / JCM 5070 / NBRC 14893 / NCIMB 12804 / NRRL 8165 / MA-4680).